The sequence spans 284 residues: Nucleotide-binding protein in ptsO 5'region (284 aa).

Position 8–15 (8–15 (GRSGSGKS)) interacts with ATP. 60–63 (DARN) lines the GTP pocket.

It belongs to the RapZ-like family.

Displays ATPase and GTPase activities. The protein is Nucleotide-binding protein in ptsO 5'region of Pseudomonas putida (Arthrobacter siderocapsulatus).